A 261-amino-acid polypeptide reads, in one-letter code: Secreted RxLR effector protein 154 (261 aa).

An N-terminal signal peptide occupies residues 1–18 (MRRCALLFRLFLISYSCS). A RxLR-dEER motif is present at residues 49–64 (RILQADDPEHIRTEER).

The protein belongs to the RxLR effector family.

The protein resides in the secreted. It localises to the host cell membrane. Its function is as follows. Secreted effector that completely suppresses the host cell death induced by cell death-inducing proteins. The polypeptide is Secreted RxLR effector protein 154 (Plasmopara viticola (Downy mildew of grapevine)).